Reading from the N-terminus, the 680-residue chain is Nodulation protein NolNO (680 aa).

The protein belongs to the NodU/CmcH family.

It is found in the cytoplasm. Its function is as follows. Involved in the O-carbamoylation of nod factors. This is Nodulation protein NolNO (nolO) from Sinorhizobium fredii (strain NBRC 101917 / NGR234).